A 179-amino-acid polypeptide reads, in one-letter code: Large ribosomal subunit protein uL6 (179 aa).

This sequence belongs to the universal ribosomal protein uL6 family. As to quaternary structure, part of the 50S ribosomal subunit.

Its function is as follows. This protein binds to the 23S rRNA, and is important in its secondary structure. It is located near the subunit interface in the base of the L7/L12 stalk, and near the tRNA binding site of the peptidyltransferase center. The protein is Large ribosomal subunit protein uL6 of Leptospira biflexa serovar Patoc (strain Patoc 1 / ATCC 23582 / Paris).